Here is a 473-residue protein sequence, read N- to C-terminus: ATP synthase subunit beta 2 (473 aa).

158-165 (GGAGVGKT) is an ATP binding site.

This sequence belongs to the ATPase alpha/beta chains family. In terms of assembly, F-type ATPases have 2 components, CF(1) - the catalytic core - and CF(0) - the membrane proton channel. CF(1) has five subunits: alpha(3), beta(3), gamma(1), delta(1), epsilon(1). CF(0) has three main subunits: a(1), b(2) and c(9-12). The alpha and beta chains form an alternating ring which encloses part of the gamma chain. CF(1) is attached to CF(0) by a central stalk formed by the gamma and epsilon chains, while a peripheral stalk is formed by the delta and b chains.

The protein localises to the cell membrane. The enzyme catalyses ATP + H2O + 4 H(+)(in) = ADP + phosphate + 5 H(+)(out). Functionally, produces ATP from ADP in the presence of a proton gradient across the membrane. The catalytic sites are hosted primarily by the beta subunits. The sequence is that of ATP synthase subunit beta 2 from Listeria welshimeri serovar 6b (strain ATCC 35897 / DSM 20650 / CCUG 15529 / CIP 8149 / NCTC 11857 / SLCC 5334 / V8).